The chain runs to 465 residues: uncharacterized protein (465 aa).

In terms of domain architecture, TRAM spans 13–71 (GPRPGLRLELQAIDLDRDGHGLARWQGWVVVVPGLLPGERAKVQLQQRQKSRWLSRISE). [4Fe-4S] cluster is bound by residues Cys-84, Cys-90, Cys-93, and Cys-171. Positions 294, 324, 345, and 391 each coordinate S-adenosyl-L-methionine. The Nucleophile role is filled by Cys-418.

This sequence belongs to the class I-like SAM-binding methyltransferase superfamily. RNA M5U methyltransferase family.

This is an uncharacterized protein from Parasynechococcus marenigrum (strain WH8102).